Consider the following 291-residue polypeptide: Stomatin-like protein 3 (291 aa).

Phosphoserine is present on serine 7. The chain crosses the membrane as a helical; Signal-anchor for type III membrane protein span at residues tryptophan 29–methionine 49. The Cytoplasmic segment spans residues cysteine 50–alanine 291. Position 241 is a phosphoserine (serine 241).

The protein belongs to the band 7/mec-2 family. In terms of assembly, homodimer. Interacts with PIEZO1 and PIEZO2.

It is found in the cell membrane. Required for the function of many mechanoreceptors. Modulate mechanotransduction channels and acid-sensing ion channels (ASIC) proteins. Potentiates PIEZO1 and PIEZO2 function by increasing their sensitivity to mechanical stimulations. The chain is Stomatin-like protein 3 (STOML3) from Homo sapiens (Human).